The following is a 645-amino-acid chain: Acetyl-coenzyme A synthetase (645 aa).

CoA-binding positions include 190–193 (RGGK) and T308. ATP contacts are provided by residues 384–386 (GEP), 408–413 (DTWWQT), D497, and R512. Residue S520 participates in CoA binding. R523 serves as a coordination point for ATP. 3 residues coordinate Mg(2+): V534, H536, and I539. At K606 the chain carries N6-acetyllysine.

Belongs to the ATP-dependent AMP-binding enzyme family. Requires Mg(2+) as cofactor. Acetylated. Deacetylation by the SIR2-homolog deacetylase activates the enzyme.

The enzyme catalyses acetate + ATP + CoA = acetyl-CoA + AMP + diphosphate. Catalyzes the conversion of acetate into acetyl-CoA (AcCoA), an essential intermediate at the junction of anabolic and catabolic pathways. AcsA undergoes a two-step reaction. In the first half reaction, AcsA combines acetate with ATP to form acetyl-adenylate (AcAMP) intermediate. In the second half reaction, it can then transfer the acetyl group from AcAMP to the sulfhydryl group of CoA, forming the product AcCoA. This Alcanivorax borkumensis (strain ATCC 700651 / DSM 11573 / NCIMB 13689 / SK2) protein is Acetyl-coenzyme A synthetase.